The sequence spans 343 residues: Zinc finger CCCH domain-containing protein 1 (343 aa).

The interval 1-102 (MSDSGEPKPS…PERSVFHYDS (102 aa)) is disordered. The span at 7–25 (PKPSQQEEPLPQPAAQETQ) shows a compositional bias: low complexity. The span at 35 to 44 (KPTKSKNIRK) shows a compositional bias: basic residues. The span at 79 to 91 (SSGPSKSSTTTSG) shows a compositional bias: low complexity. The C3H1-type zinc-finger motif lies at 200-228 (DYQPDICKDYKETGYCGYGDSCKFLHDRG). Residues 249 to 268 (RNKAMGVEDEDDEADKDSDE) are disordered. Positions 255–268 (VEDEDDEADKDSDE) are enriched in acidic residues. The segment at 277 to 315 (CFICREPFVDPVVTKCKHYFCEHCALKHHTKNKKCFVCN) adopts an RING-type zinc-finger fold.

The sequence is that of Zinc finger CCCH domain-containing protein 1 from Arabidopsis thaliana (Mouse-ear cress).